Here is a 684-residue protein sequence, read N- to C-terminus: Glycine--tRNA ligase beta subunit (684 aa).

This sequence belongs to the class-II aminoacyl-tRNA synthetase family. As to quaternary structure, tetramer of two alpha and two beta subunits.

The protein resides in the cytoplasm. The catalysed reaction is tRNA(Gly) + glycine + ATP = glycyl-tRNA(Gly) + AMP + diphosphate. The sequence is that of Glycine--tRNA ligase beta subunit from Pseudomonas entomophila (strain L48).